Reading from the N-terminus, the 399-residue chain is Arginase (399 aa).

Mn(2+)-binding residues include His-193, Asp-216, His-218, and Asp-220. Residues 218–222 (HADIN), 229–231 (SGN), and Asp-273 each bind substrate. Mn(2+) is bound by residues Asp-322 and Asp-324. Substrate is bound by residues Thr-336 and Glu-367.

The protein belongs to the arginase family. Mn(2+) is required as a cofactor.

It localises to the cytoplasm. It catalyses the reaction L-arginine + H2O = urea + L-ornithine. The protein operates within nitrogen metabolism; urea cycle; L-ornithine and urea from L-arginine: step 1/1. The polypeptide is Arginase (CAR1) (Eremothecium gossypii (strain ATCC 10895 / CBS 109.51 / FGSC 9923 / NRRL Y-1056) (Yeast)).